A 147-amino-acid chain; its full sequence is NADH-quinone oxidoreductase subunit A (147 aa).

Helical transmembrane passes span 13–33 (LFSYAVAIVVLLAAMLGLGAV), 70–90 (YLVAMLFVIFDVESVFLFSWA), and 104–124 (VVVFVASLAAALAYVWRWGAL).

This sequence belongs to the complex I subunit 3 family. As to quaternary structure, NDH-1 is composed of 14 different subunits. Subunits NuoA, H, J, K, L, M, N constitute the membrane sector of the complex.

Its subcellular location is the cell inner membrane. It carries out the reaction a quinone + NADH + 5 H(+)(in) = a quinol + NAD(+) + 4 H(+)(out). Its function is as follows. NDH-1 shuttles electrons from NADH, via FMN and iron-sulfur (Fe-S) centers, to quinones in the respiratory chain. The immediate electron acceptor for the enzyme in this species is believed to be ubiquinone. Couples the redox reaction to proton translocation (for every two electrons transferred, four hydrogen ions are translocated across the cytoplasmic membrane), and thus conserves the redox energy in a proton gradient. The sequence is that of NADH-quinone oxidoreductase subunit A from Gluconacetobacter diazotrophicus (strain ATCC 49037 / DSM 5601 / CCUG 37298 / CIP 103539 / LMG 7603 / PAl5).